Here is a 202-residue protein sequence, read N- to C-terminus: D-alanyl-D-alanine dipeptidase (202 aa).

Zn(2+) contacts are provided by His-116 and Asp-123. Glu-181 serves as the catalytic Proton donor/acceptor. His-184 is a binding site for Zn(2+).

The protein belongs to the peptidase M15D family. Zn(2+) serves as cofactor.

It catalyses the reaction D-alanyl-D-alanine + H2O = 2 D-alanine. Its function is as follows. Catalyzes hydrolysis of the D-alanyl-D-alanine dipeptide. This Enterococcus faecalis (strain ATCC 700802 / V583) protein is D-alanyl-D-alanine dipeptidase (vanXB).